The chain runs to 251 residues: Protein FAM216A (251 aa).

The segment at 1–41 (MPSRWPGVAGPPALARTEGGEGSAGHSYPQNSKGTGEQHKA) is disordered.

This sequence belongs to the FAM216 family.

This Mus musculus (Mouse) protein is Protein FAM216A (Fam216a).